The following is a 347-amino-acid chain: Probable dual-specificity RNA methyltransferase RlmN (347 aa).

Residue Glu-91 is the Proton acceptor of the active site. The region spanning 97–327 (YKYGNSICVS…ATVRREMGSD (231 aa)) is the Radical SAM core domain. Cysteines 104 and 332 form a disulfide. Residues Cys-111, Cys-115, and Cys-118 each contribute to the [4Fe-4S] cluster site. Residues 158–159 (GE), Ser-190, 213–215 (SLH), and Asn-289 each bind S-adenosyl-L-methionine. The S-methylcysteine intermediate role is filled by Cys-332.

Belongs to the radical SAM superfamily. RlmN family. It depends on [4Fe-4S] cluster as a cofactor.

The protein localises to the cytoplasm. It catalyses the reaction adenosine(2503) in 23S rRNA + 2 reduced [2Fe-2S]-[ferredoxin] + 2 S-adenosyl-L-methionine = 2-methyladenosine(2503) in 23S rRNA + 5'-deoxyadenosine + L-methionine + 2 oxidized [2Fe-2S]-[ferredoxin] + S-adenosyl-L-homocysteine. The enzyme catalyses adenosine(37) in tRNA + 2 reduced [2Fe-2S]-[ferredoxin] + 2 S-adenosyl-L-methionine = 2-methyladenosine(37) in tRNA + 5'-deoxyadenosine + L-methionine + 2 oxidized [2Fe-2S]-[ferredoxin] + S-adenosyl-L-homocysteine. Its function is as follows. Specifically methylates position 2 of adenine 2503 in 23S rRNA and position 2 of adenine 37 in tRNAs. This Clostridium perfringens (strain SM101 / Type A) protein is Probable dual-specificity RNA methyltransferase RlmN.